The chain runs to 626 residues: DNA primase (626 aa).

The segment at 39-63 (CPFHGEKTPSFSVSPEKQIFHCFGC) adopts a CHC2-type zinc-finger fold. Residues 264-346 (EEITLMEGFM…DVFVLQLPAG (83 aa)) enclose the Toprim domain. Mg(2+)-binding residues include Glu-270, Asp-314, and Asp-316.

It belongs to the DnaG primase family. In terms of assembly, monomer. Interacts with DnaB. It depends on Zn(2+) as a cofactor. The cofactor is Mg(2+).

It catalyses the reaction ssDNA + n NTP = ssDNA/pppN(pN)n-1 hybrid + (n-1) diphosphate.. In terms of biological role, RNA polymerase that catalyzes the synthesis of short RNA molecules used as primers for DNA polymerase during DNA replication. This is DNA primase from Listeria monocytogenes serovar 1/2a (strain ATCC BAA-679 / EGD-e).